Consider the following 208-residue polypeptide: AN1-type zinc finger protein 6 (208 aa).

Residues 8–42 form an A20-type zinc finger; the sequence is SQVPMLCSTGCGFYGNPRTNGMCSVCYKEHLQRQN. Residues C14, C18, C30, and C33 each contribute to the Zn(2+) site. The disordered stretch occupies residues 41 to 110; it reads QNSSNGRISP…ASSQVDSTSV (70 aa). At S49 the chain carries Phosphoserine. The segment covering 54–68 has biased composition (polar residues); the sequence is SVTSLSESLPVQCTD. The segment covering 83–94 has biased composition (low complexity); it reads SSVQPSPVSNQS. Residues 95 to 110 show a composition bias toward polar residues; it reads LLSESVASSQVDSTSV. The AN1-type zinc-finger motif lies at 143–189; the sequence is KQKKNRCFMCRKKVGLTGFECRCGNVYCGVHRYSDVHNCSYNYKADA. Residues C149, C152, C163, C165, C170, H173, H179, and C181 each contribute to the Zn(2+) site. K204 is modified (N6-acetyllysine).

As to quaternary structure, interacts with PKN1.

In Bos taurus (Bovine), this protein is AN1-type zinc finger protein 6 (ZFAND6).